A 202-amino-acid polypeptide reads, in one-letter code: Transmembrane 4 L6 family member 1 (202 aa).

The Cytoplasmic segment spans residues 1–9; the sequence is MCYGKCARC. The chain crosses the membrane as a helical span at residues 10–30; the sequence is IGHSLVGLALLCIAANILLYF. Residues 31–49 are Extracellular-facing; it reads PNGETKYASENHLSRFVWF. Residues 50–70 traverse the membrane as a helical segment; it reads FSGIVGGGLLMLLPAFVFIGL. At 71–93 the chain is on the cytoplasmic side; it reads EQDDCCGCCGHENCGKRCAMLSS. Residues 94–114 form a helical membrane-spanning segment; that stretch reads VLAALIGIAGSGYCVIVAALG. At 115 to 161 the chain is on the extracellular side; that stretch reads LAEGPLCLDSLGQWNYTFASTEGQYLLDTSTWSECTEPKHIVEWNVS. Residues asparagine 129 and asparagine 159 are each glycosylated (N-linked (GlcNAc...) asparagine). A helical membrane pass occupies residues 162–182; sequence LFSILLALGGIEFILCLIQVI. At 183–202 the chain is on the cytoplasmic side; that stretch reads NGVLGGICGFCCSHQQQYDC.

It belongs to the L6 tetraspanin family. As to quaternary structure, present in high molecular weight complexes in tumor cells. Interacts with SDCBP2. Highly expressed in lung, breast, colon and ovarian carcinomas. It is also present on some normal cells, endothelial cells in particular.

Its subcellular location is the membrane. This Homo sapiens (Human) protein is Transmembrane 4 L6 family member 1 (TM4SF1).